Reading from the N-terminus, the 304-residue chain is MTKVSVIGAAGTVGAAAGYNLALRDVCDELVFVDIPKMEDKTVGQAADTNHGIAYDSNTVVTQGGYEDTAGSDVVVITAGIPRQPGQTRIDLAGDNAPIMDDIGSSLAEYNDDFVSITTSNPVDLLNRHLYETGDRDRHKVIGFGGRLDSARFRYVLSQRFDVPVKNVDATILGEHGDAQVPVFSKVRVDGNDPAFSADEKEEILGDLQESAMDVIERKGATQWGPATGVAHMVEAVLHDTGEVLPGSLVLDGEFGYEDTAFGVPVKLGSNGIEEVVEWDLDDYEADLMDDAAEKLRDQYDEIA.

Residues 8-14 and D34 contribute to the NAD(+) site; that span reads GAAGTVG. 2 residues coordinate substrate: R83 and R89. Residues N96 and 119–121 each bind NAD(+); that span reads TSN. N121 and R152 together coordinate substrate. H176 (proton acceptor) is an active-site residue.

The protein belongs to the LDH/MDH superfamily.

It carries out the reaction (S)-malate + NAD(+) = oxaloacetate + NADH + H(+). Catalyzes the reversible oxidation of malate to oxaloacetate. The sequence is that of Malate dehydrogenase (mdh) from Haloferax volcanii (strain ATCC 29605 / DSM 3757 / JCM 8879 / NBRC 14742 / NCIMB 2012 / VKM B-1768 / DS2) (Halobacterium volcanii).